Here is a 208-residue protein sequence, read N- to C-terminus: MAEAEGSSPLLLQPPPPPPRMAEVETPTGAETDMKQYHGSGGVVMDVERSRFPYCVVWTPIPVLTWFFPIIGHMGICTSAGVIRDFAGPYFVSEDNMAFGKPAKFWKLDPGQVYASGPNAWDTAVHDASEEYKHRMHNLCCDNCHSHVALALNLMRYNNSTNWNMVTLCCFCLIYGKYVSVGAFVKTWLPFVLLLGIILTVSLVFNLR.

Residues methionine 1–methionine 34 are disordered. Over methionine 1–cysteine 55 the chain is Extracellular. The helical transmembrane segment at valine 56–isoleucine 76 threads the bilayer. Topologically, residues cysteine 77 to asparagine 164 are cytoplasmic. Residues methionine 165–valine 185 form a helical membrane-spanning segment. Lysine 186 is a topological domain (extracellular). The helical transmembrane segment at threonine 187–leucine 207 threads the bilayer. Arginine 208 is a topological domain (cytoplasmic).

It is found in the membrane. The protein localises to the cell projection. The protein resides in the dendrite. This is Transmembrane protein 222 (Tmem222) from Mus musculus (Mouse).